Consider the following 268-residue polypeptide: Fc receptor-like protein 6 (268 aa).

The first 16 residues, methionine 1–alanine 16, serve as a signal peptide directing secretion. Residues glutamine 17–proline 215 lie on the Extracellular side of the membrane. In terms of domain architecture, Ig-like C2-type spans proline 114–serine 194. A disulfide bond links cysteine 135 and cysteine 183. Asparagine 180 and asparagine 188 each carry an N-linked (GlcNAc...) asparagine glycan. Residues isoleucine 216–phenylalanine 236 form a helical membrane-spanning segment. At phenylalanine 237–lysine 268 the chain is on the cytoplasmic side.

In terms of assembly, interacts with class II MHC.

It is found in the cell membrane. In terms of biological role, acts as a MHC class II receptor. When stimulated on its own, does not play a role in cytokine production or the release of cytotoxic granules by NK cells and cytotoxic CD8(+) T cells. Does not act as an Fc receptor. The chain is Fc receptor-like protein 6 (Fcrl6) from Mus musculus (Mouse).